The following is a 372-amino-acid chain: GTPase Obg (372 aa).

The 159-residue stretch at 1 to 159 (MKFIDEARIE…RMLKLELKVL (159 aa)) folds into the Obg domain. Residues 128–147 (LHFKSSTNRAPRQKTDGKPG) are disordered. The OBG-type G domain maps to 160 to 334 (ADVGLLGMPN…LVYAIHDYLV (175 aa)). GTP-binding positions include 166 to 173 (GMPNAGKS), 191 to 195 (FTTLA), 213 to 216 (DIPG), 284 to 287 (NKLD), and 315 to 317 (SAL). Ser173 and Thr193 together coordinate Mg(2+).

It belongs to the TRAFAC class OBG-HflX-like GTPase superfamily. OBG GTPase family. Monomer. Mg(2+) serves as cofactor.

Its subcellular location is the cytoplasm. In terms of biological role, an essential GTPase which binds GTP, GDP and possibly (p)ppGpp with moderate affinity, with high nucleotide exchange rates and a fairly low GTP hydrolysis rate. Plays a role in control of the cell cycle, stress response, ribosome biogenesis and in those bacteria that undergo differentiation, in morphogenesis control. The sequence is that of GTPase Obg from Burkholderia pseudomallei (strain 668).